The chain runs to 490 residues: Cytochrome P450 2C50 (490 aa).

The residue at position 127 (serine 127) is a Phosphoserine. An N6-acetyllysine mark is found at lysine 249 and lysine 375. Cysteine 435 is a heme binding site.

The protein belongs to the cytochrome P450 family. It depends on heme as a cofactor. As to expression, expressed in heart and liver.

Its subcellular location is the endoplasmic reticulum membrane. The protein resides in the microsome membrane. It catalyses the reaction an organic molecule + reduced [NADPH--hemoprotein reductase] + O2 = an alcohol + oxidized [NADPH--hemoprotein reductase] + H2O + H(+). Metabolizes arachidonic acid to several midchain and omega-terminal hydroxyeicosatetraenoic acids (HETE). The polypeptide is Cytochrome P450 2C50 (Mus musculus (Mouse)).